A 145-amino-acid polypeptide reads, in one-letter code: Large ribosomal subunit protein uL14m (145 aa).

A mitochondrion-targeting transit peptide spans Met-1–Ser-30.

Belongs to the universal ribosomal protein uL14 family. As to quaternary structure, component of the mitochondrial ribosome large subunit (39S) which comprises a 16S rRNA and about 50 distinct proteins. Interacts with MALSU1.

It localises to the mitochondrion. May form part of 2 intersubunit bridges in the assembled ribosome. Upon binding to MALSU1, intersubunit bridge formation is blocked, preventing ribosome formation and repressing translation. This chain is Large ribosomal subunit protein uL14m (Mrpl14), found in Rattus norvegicus (Rat).